The primary structure comprises 268 residues: Undecaprenyl-diphosphatase (268 aa).

7 helical membrane-spanning segments follow: residues Val42–Leu62, Ala86–Leu106, Val108–Val128, Ile158–Gly178, Ala184–Leu204, Leu218–Val238, and Phe246–Leu266.

Belongs to the UppP family.

It is found in the cell inner membrane. It catalyses the reaction di-trans,octa-cis-undecaprenyl diphosphate + H2O = di-trans,octa-cis-undecaprenyl phosphate + phosphate + H(+). Its function is as follows. Catalyzes the dephosphorylation of undecaprenyl diphosphate (UPP). Confers resistance to bacitracin. The protein is Undecaprenyl-diphosphatase of Parvibaculum lavamentivorans (strain DS-1 / DSM 13023 / NCIMB 13966).